The primary structure comprises 162 residues: Peptidyl-prolyl cis-trans isomerase (162 aa).

One can recognise a PPIase cyclophilin-type domain in the interval 5 to 161 (FFDVIANGQP…ARIVIDKCGT (157 aa)).

This sequence belongs to the cyclophilin-type PPIase family. PPIase A subfamily.

Its subcellular location is the cytoplasm. It catalyses the reaction [protein]-peptidylproline (omega=180) = [protein]-peptidylproline (omega=0). Binds cyclosporin A (CsA). CsA mediates some of its effects via an inhibitory action on PPIase. Its function is as follows. PPIases accelerate the folding of proteins. It catalyzes the cis-trans isomerization of proline imidic peptide bonds in oligopeptides. The chain is Peptidyl-prolyl cis-trans isomerase (ppi1) from Schizosaccharomyces pombe (strain 972 / ATCC 24843) (Fission yeast).